The sequence spans 572 residues: Proline dehydrogenase 1, mitochondrial (572 aa).

The segment covering 105-124 (NHSNQTNNVNNKNYNNNNNN) has biased composition (low complexity). The tract at residues 105–140 (NHSNQTNNVNNKNYNNNNNNFEKDDKFGPPNNQNNN) is disordered.

Belongs to the proline oxidase family. Requires FAD as cofactor.

It is found in the mitochondrion matrix. It catalyses the reaction L-proline + a quinone = (S)-1-pyrroline-5-carboxylate + a quinol + H(+). It functions in the pathway amino-acid degradation; L-proline degradation into L-glutamate; L-glutamate from L-proline: step 1/2. Functionally, converts proline to delta-1-pyrroline-5-carboxylate. The sequence is that of Proline dehydrogenase 1, mitochondrial (prodh) from Dictyostelium discoideum (Social amoeba).